We begin with the raw amino-acid sequence, 335 residues long: MTDKTIAFSLLDLAPIPEGSSAREAFSHSLDLARLAEKRGYHRYWLAEHHNMTGIASAATSVLIGYLAANTTTLHLGSGGVMLPNHSPLVIAEQFGTLNTLYPGRIDLGLGRAPGSDQRTMMALRRHMSGDIDNFPRDVAELVDWFDARDPNPHVRPVPGYGEKIPVWLLGSSLYSAQLAAQLGLPFAFASHFAPDMLFQALHLYRSNFKPSARLEKPYAMVCINIIAADSNRDAEFLFTSMQQAFVKLRRGETGQLPPPIQNMDQFWSPSEQYGVQQALSMSLVGDKAKVRHGLQSILRETDADEIMVNGQIFDHQARLHSFELAMDVKEELLG.

It to bacterial alkanal monooxygenase alpha and beta chains.

In Escherichia coli O6:H1 (strain CFT073 / ATCC 700928 / UPEC), this protein is Luciferase-like monooxygenase (yhbW).